The primary structure comprises 259 residues: Putative carbamate hydrolase RutD (259 aa).

It belongs to the AB hydrolase superfamily. Hydrolase RutD family.

The enzyme catalyses carbamate + 2 H(+) = NH4(+) + CO2. Its function is as follows. Involved in pyrimidine catabolism. May facilitate the hydrolysis of carbamate, a reaction that can also occur spontaneously. The polypeptide is Putative carbamate hydrolase RutD (Pseudomonas syringae pv. syringae (strain B728a)).